The following is a 265-amino-acid chain: Lipopolysaccharide core heptose(I) kinase WaaP (265 aa).

The active site involves Asp-162.

This sequence belongs to the protein kinase superfamily. KdkA/RfaP family. It depends on Mg(2+) as a cofactor.

The catalysed reaction is an L-alpha-D-Hep-(1-&gt;3)-L-alpha-D-Hep-(1-&gt;5)-[alpha-Kdo-(2-&gt;4)]-alpha-Kdo-(2-&gt;6)-lipid A + ATP = an L-alpha-D-Hep-(1-&gt;3)-4-O-phospho-L-alpha-D-Hep-(1-&gt;5)-[alpha-Kdo-(2-&gt;4)]-alpha-Kdo-(2-&gt;6)-lipid A + ADP + H(+). It catalyses the reaction L-alpha-D-Hep-(1-&gt;3)-L-alpha-D-Hep-(1-&gt;5)-[alpha-Kdo-(2-&gt;4)]-alpha-Kdo-(2-&gt;6)-lipid A (E. coli) + ATP = L-alpha-D-Hep-(1-&gt;3)-4-O-phospho-L-alpha-D-Hep-(1-&gt;5)-[alpha-Kdo-(2-&gt;4)]-alpha-Kdo-(2-&gt;6)-lipid A (E. coli) + ADP + H(+). Its pathway is bacterial outer membrane biogenesis; LPS core biosynthesis. Kinase involved in the biosynthesis of the core oligosaccharide region of lipopolysaccharide (LPS). Catalyzes the phosphorylation of heptose I (HepI), the first heptose added to the Kdo2-lipid A module. This Escherichia coli (strain K12) protein is Lipopolysaccharide core heptose(I) kinase WaaP.